A 276-amino-acid polypeptide reads, in one-letter code: 2-dehydro-3-deoxyphosphooctonate aldolase (276 aa).

It belongs to the KdsA family.

It localises to the cytoplasm. The catalysed reaction is D-arabinose 5-phosphate + phosphoenolpyruvate + H2O = 3-deoxy-alpha-D-manno-2-octulosonate-8-phosphate + phosphate. Its pathway is carbohydrate biosynthesis; 3-deoxy-D-manno-octulosonate biosynthesis; 3-deoxy-D-manno-octulosonate from D-ribulose 5-phosphate: step 2/3. The protein operates within bacterial outer membrane biogenesis; lipopolysaccharide biosynthesis. In Helicobacter pylori (strain Shi470), this protein is 2-dehydro-3-deoxyphosphooctonate aldolase.